Reading from the N-terminus, the 426-residue chain is Endoglucanase (426 aa).

The first 19 residues, 1-19 (MRRCMPLVAASVAALMLAG), serve as a signal peptide directing secretion. A lipid anchor (N-palmitoyl cysteine) is attached at Cys-20. Cys-20 is lipidated: S-diacylglycerol cysteine. The propeptide occupies 20 to 45 (CGGGDGDPSLSTASVSATDTTTLKPA). Glu-249 (proton donor) is an active-site residue. Glu-361 (nucleophile) is an active-site residue.

This sequence belongs to the glycosyl hydrolase 5 (cellulase A) family.

The protein resides in the cell membrane. The enzyme catalyses Endohydrolysis of (1-&gt;4)-beta-D-glucosidic linkages in cellulose, lichenin and cereal beta-D-glucans.. The chain is Endoglucanase (egl) from Ralstonia solanacearum (Pseudomonas solanacearum).